Here is a 337-residue protein sequence, read N- to C-terminus: Mitochondrial amidoxime-reducing component 1 (337 aa).

Glycine 2 carries N-myristoyl glycine lipidation. Topologically, residues 2–20 are mitochondrial matrix; the sequence is GAAGSSALARFVLLAQSRP. Residues 21–40 form a helical; Signal-anchor for type II membrane protein membrane-spanning segment; the sequence is GWLGVAALGLTAVALGAVAW. At 41-337 the chain is on the cytoplasmic side; sequence RRAWPTRRRR…VGDPVYLLGQ (297 aa). 3 residues coordinate Mo-molybdopterin: lysine 67, serine 68, and arginine 92. Residues 93–183 are MOSC N-terminal region; the sequence is FWLVINQEGN…KSQPYRLVHF (91 aa). Residues 187-335 form the MOSC domain; it reads MRPRRPHQIA…IKVGDPVYLL (149 aa). Residues threonine 210, serine 211, arginine 238, asparagine 240, serine 271, arginine 272, cysteine 273, and tyrosine 317 each contribute to the Mo-molybdopterin site.

As to quaternary structure, component of a complex composed of cytochrome b5, NADH-cytochrome b5 reductase and MTARC1. Mo-molybdopterin is required as a cofactor.

The protein resides in the mitochondrion outer membrane. It is found in the membrane. It catalyses the reaction N(omega)-hydroxy-L-arginine + 2 Fe(II)-[cytochrome b5] + 2 H(+) = L-arginine + 2 Fe(III)-[cytochrome b5] + H2O. In terms of biological role, catalyzes the reduction of N-oxygenated molecules, acting as a counterpart of cytochrome P450 and flavin-containing monooxygenases in metabolic cycles. As a component of prodrug-converting system, reduces a multitude of N-hydroxylated prodrugs particularly amidoximes, leading to increased drug bioavailability. May be involved in mitochondrial N(omega)-hydroxy-L-arginine (NOHA) reduction, regulating endogenous nitric oxide levels and biosynthesis. Postulated to cleave the N-OH bond of N-hydroxylated substrates in concert with electron transfer from NADH to cytochrome b5 reductase then to cytochrome b5, the ultimate electron donor that primes the active site for substrate reduction. This chain is Mitochondrial amidoxime-reducing component 1, found in Homo sapiens (Human).